A 614-amino-acid polypeptide reads, in one-letter code: Fem-3 mRNA-binding factor 1 (614 aa).

The span at 1 to 24 (MDQSKMRYTNQFRKTPQKPTSTEV) shows a compositional bias: polar residues. A disordered region spans residues 1 to 34 (MDQSKMRYTNQFRKTPQKPTSTEVGNHHTPAHSP). Residues 160–564 (TRSNNVLPTW…KMIETLAHLR (405 aa)) enclose the PUM-HD domain. 8 Pumilio repeats span residues 185–223 (EVLD…QLFE), 224–263 (QVIG…NIKR), 269–305 (NFIS…KLVQ), 306–342 (ALPR…EFIV), 343–382 (DFVA…DLTS), 398–434 (SVTN…CIIE), 436–471 (CLMR…EMMD), and 483–519 (TGKD…RQTK). The interval 283–614 (FACRVIQSSL…NLRLMRTFSP (332 aa)) is binding to gld-3 isoform A.

Interacts (via C-terminus) with gld-3 isoform A in an RNA-independent manner. As to expression, expressed specifically in the germline (at protein level).

The protein resides in the cytoplasm. RNA-binding protein that binds to the consensus sequence 5'-UGUGCCAUA-3' in mRNA 3'-UTRs. Involved in the control of stem cells and sex determination in the C.elegans hermaphrodite germline. May also play a role in the hermaphrodite germline proliferation and oogenesis. Binds specifically to the regulatory region of fem-3 3'-UTR and mediates the sperm/oocyte switch. Negatively regulates gld-3 expression, possibly by directly binding to two sites within the 3'-UTR of gld-3 isoform b. In association with the cye-1/cdk-2 complex, negatively regulates gld-1 expression in the distal germline cells of the mitotic zone. By binding to the 3'-UTR, represses phosphatase lip-1 expression in the distal part of the germline mitotic zone. Suppresses germline tumor formation by preventing the dedifferentiation of secondary spermatocytes. The chain is Fem-3 mRNA-binding factor 1 (fbf-1) from Caenorhabditis elegans.